A 977-amino-acid polypeptide reads, in one-letter code: Aspartate, glycine, lysine and serine-rich protein (977 aa).

Positions glycine 23–serine 116 are disordered. Basic and acidic residues predominate over residues glutamate 37–proline 50. Residues glutamate 51–asparagine 63 show a composition bias toward polar residues. An N-linked (GlcNAc...) asparagine glycan is attached at asparagine 136. 2 disordered regions span residues alanine 246–glycine 767 and glycine 780–leucine 922. Positions tyrosine 251–serine 278 are enriched in low complexity. Positions asparagine 309–threonine 325 are enriched in polar residues. The span at leucine 410–aspartate 427 shows a compositional bias: acidic residues. Residues glycine 428 to glycine 443 are compositionally biased toward gly residues. Basic residues-rich tracts occupy residues threonine 447 to lysine 457 and lysine 465 to lysine 540. Positions glutamine 541–serine 557 are enriched in basic and acidic residues. A compositionally biased stretch (low complexity) spans lysine 572–glycine 583. Residues aspartate 591–aspartate 643 show a composition bias toward gly residues. A compositionally biased stretch (basic and acidic residues) spans glutamate 660–cysteine 675. Positions serine 700–serine 724 are enriched in low complexity. 3 stretches are compositionally biased toward polar residues: residues isoleucine 730 to glycine 744, serine 758 to glycine 767, and serine 785 to alanine 801. 3 stretches are compositionally biased toward low complexity: residues glycine 803–glycine 814, glycine 822–glycine 857, and lysine 870–proline 907.

Component of the acid-insoluble and acid-soluble organic matrix of calcified layers of the shell (at protein level).

Its subcellular location is the secreted. This chain is Aspartate, glycine, lysine and serine-rich protein, found in Lottia gigantea (Giant owl limpet).